A 1017-amino-acid polypeptide reads, in one-letter code: DNA replication licensing factor MCM6 (1017 aa).

Disordered regions lie at residues 1–94 (MSSP…SFKS) and 200–257 (SDSL…TSPE). Residues 24–34 (SIGAGFGSSSG) are compositionally biased toward low complexity. Positions 35–83 (LDSQIGSRLHFPSSSQPHVSNSQTGPFVNDSTQFSSQRLQTDGSATNDM) are enriched in polar residues. Serine 78 is subject to Phosphoserine. Over residues 209 to 223 (DEGQADEDEQQDDDM) the composition is skewed to acidic residues. Over residues 224 to 257 (NGSSLPRDSGSSAAPGNGTSAMATRSITTSTSPE) the composition is skewed to polar residues. Phosphoserine is present on residues serine 249 and serine 372. The MCM domain maps to 525–732 (IYDKLVRSIA…IDTELASHIV (208 aa)). ATP is bound at residue 575-582 (GDPSTSKS). The short motif at 707 to 710 (SRFD) is the Arginine finger element. Threonine 766 bears the Phosphothreonine mark. The disordered stretch occupies residues 852 to 901 (IESQSHAASGNNDDNDDGTGSGVITSEPPADIEEGQSEATARPGTSEKKK).

This sequence belongs to the MCM family. As to quaternary structure, component of the MCM2-7 complex. The complex forms a toroidal hexameric ring with the proposed subunit order MCM2-MCM6-MCM4-MCM7-MCM3-MCM5; loaded onto DNA, forms a head-head double hexamer. Interacts with MCM10.

Its subcellular location is the nucleus. It catalyses the reaction ATP + H2O = ADP + phosphate + H(+). Functionally, acts as a component of the MCM2-7 complex (MCM complex) which is the putative replicative helicase essential for 'once per cell cycle' DNA replication initiation and elongation in eukaryotic cells. The active ATPase sites in the MCM2-7 ring are formed through the interaction surfaces of two neighboring subunits such that a critical structure of a conserved arginine finger motif is provided in trans relative to the ATP-binding site of the Walker A box of the adjacent subunit. The six ATPase active sites, however, are likely to contribute differentially to the complex helicase activity. Once loaded onto DNA, double hexamers can slide on dsDNA in the absence of ATPase activity. Required for the entry in S phase and for cell division. The sequence is that of DNA replication licensing factor MCM6 (MCM6) from Saccharomyces cerevisiae (strain ATCC 204508 / S288c) (Baker's yeast).